Reading from the N-terminus, the 325-residue chain is Tetraacyldisaccharide 4'-kinase (325 aa).

Thr-55–Thr-62 provides a ligand contact to ATP.

Belongs to the LpxK family.

The enzyme catalyses a lipid A disaccharide + ATP = a lipid IVA + ADP + H(+). The protein operates within glycolipid biosynthesis; lipid IV(A) biosynthesis; lipid IV(A) from (3R)-3-hydroxytetradecanoyl-[acyl-carrier-protein] and UDP-N-acetyl-alpha-D-glucosamine: step 6/6. Its function is as follows. Transfers the gamma-phosphate of ATP to the 4'-position of a tetraacyldisaccharide 1-phosphate intermediate (termed DS-1-P) to form tetraacyldisaccharide 1,4'-bis-phosphate (lipid IVA). The chain is Tetraacyldisaccharide 4'-kinase from Salmonella enteritidis PT4 (strain P125109).